We begin with the raw amino-acid sequence, 447 residues long: Ribosomal protein uS12 methylthiotransferase RimO (447 aa).

The 111-residue stretch at 10–120 (PKVGFVSLGC…VVNAVHDVVP (111 aa)) folds into the MTTase N-terminal domain. Residues cysteine 19, cysteine 55, cysteine 84, cysteine 153, cysteine 157, and cysteine 160 each contribute to the [4Fe-4S] cluster site. Residues 139 to 377 (LTPRHYAYLK…MAHQQAISAA (239 aa)) enclose the Radical SAM core domain. A TRAM domain is found at 380 to 447 (QMKIGKEIEV…DEYDLWAEML (68 aa)).

Belongs to the methylthiotransferase family. RimO subfamily. [4Fe-4S] cluster is required as a cofactor.

Its subcellular location is the cytoplasm. The enzyme catalyses L-aspartate(89)-[ribosomal protein uS12]-hydrogen + (sulfur carrier)-SH + AH2 + 2 S-adenosyl-L-methionine = 3-methylsulfanyl-L-aspartate(89)-[ribosomal protein uS12]-hydrogen + (sulfur carrier)-H + 5'-deoxyadenosine + L-methionine + A + S-adenosyl-L-homocysteine + 2 H(+). Its function is as follows. Catalyzes the methylthiolation of an aspartic acid residue of ribosomal protein uS12. The protein is Ribosomal protein uS12 methylthiotransferase RimO of Pseudomonas savastanoi pv. phaseolicola (strain 1448A / Race 6) (Pseudomonas syringae pv. phaseolicola (strain 1448A / Race 6)).